The sequence spans 405 residues: Dynactin subunit 2 (405 aa).

Positions 1-24 (MADPKYADLPGIARNEPDVYETSD) are disordered. A coiled-coil region spans residues 101-134 (PQQKYQRLLHEIQELTQEVEKAQSTVKESAAEEK). The tract at residues 186-207 (AKTRKNPEGKSPAKGPGPDNEN) is disordered. A coiled-coil region spans residues 383–403 (KENLATVEDNFTSIDARIKKL).

Belongs to the dynactin subunit 2 family. As to quaternary structure, subunit of dynactin, a multiprotein complex part of a tripartite complex with dynein and a adapter, such as BICDL1, BICD2 or HOOK3. The dynactin complex is built around ACTR1A/ACTB filament and consists of an actin-related filament composed of a shoulder domain, a pointed end and a barbed end. Its length is defined by its flexible shoulder domain. The soulder is composed of 2 DCTN1 subunits, 4 DCTN2 and 2 DCTN3.

It is found in the cytoplasm. It localises to the cytoskeleton. The protein resides in the microtubule organizing center. The protein localises to the centrosome. Its subcellular location is the membrane. Its function is as follows. Part of the dynactin complex that activates the molecular motor dynein for ultra-processive transport along microtubules. In the dynactin soulder domain, binds the ACTR1A filament and acts as a molecular ruler to determine the length. Modulates cytoplasmic dynein binding to an organelle, and plays a role in prometaphase chromosome alignment and spindle organization during mitosis. Involved in anchoring microtubules to centrosomes. The chain is Dynactin subunit 2 (dctn2) from Xenopus tropicalis (Western clawed frog).